Here is a 398-residue protein sequence, read N- to C-terminus: Ureide permease 2 (398 aa).

The Extracellular portion of the chain corresponds to 1–10 (MYLVESKGGA). The chain crosses the membrane as a helical span at residues 11-31 (IACMLLALLSLGTWPAVLTLL). Over 32-44 (ERRGRLPQHTYLD) the chain is Cytoplasmic. Residues 45-65 (YSITNLLAAIIIAFTFGQIGS) form a helical membrane-spanning segment. The Extracellular segment spans residues 66–81 (TKPDSPNFITQLAQDN). Residues 82 to 102 (WPSVMFAMAGGIVLSLGNLST) traverse the membrane as a helical segment. Residues 103–104 (QY) are Cytoplasmic-facing. A helical membrane pass occupies residues 105–125 (AWALVGLSVTEVITSSITVVI). The Extracellular segment spans residues 126 to 139 (GSTLNYFLDDKINK). The chain crosses the membrane as a helical span at residues 140-160 (AEILFPGVACFLIAVCLGSAV). Residues 161–229 (HRSNADDNKA…RAIKVFGKRK (69 aa)) lie on the Cytoplasmic side of the membrane. Positions 176-200 (ETAKQEASGPSTEIGTNSSKDLETN) are disordered. Polar residues predominate over residues 183–200 (SGPSTEIGTNSSKDLETN). 221–228 (AIKVFGKR) is a binding site for ATP. Residues 230–250 (IIGLAITFFAGLCFSLFSPAF) traverse the membrane as a helical segment. The Extracellular segment spans residues 251–272 (NLATNDQWNRLKQGVPKLVVYT). Residues 273-293 (AFFYFSVSCFIIALILNVVFL) form a helical membrane-spanning segment. Residues 294 to 315 (YYPVLGLPKSSFKAYLNDWNGR) are Cytoplasmic-facing. The helical transmembrane segment at 316–336 (YWAFLAGFLCGFGNGLQFMGG) threads the bilayer. The Extracellular segment spans residues 337–341 (QAAGY). The chain crosses the membrane as a helical span at residues 342–362 (AAADSVQALPLVSTFWGVVLF). At 363-371 (GEYRRSSRK) the chain is on the cytoplasmic side. Residues 372-392 (TYLLLFCMLFMFISAVAVLMA) form a helical membrane-spanning segment. The Extracellular portion of the chain corresponds to 393–398 (SSGHRK).

Belongs to the plant ureide permease (TC 2.A.7.19) family. As to expression, expressed in root xylem, cotyledons and leaves. Expressed in leaf blades, petioles, trichomes, stems, flower stigma, the upper part of pedicels, sepals, and the top and bottom parts of carpels in siliques.

The protein resides in the membrane. In terms of biological role, proton-coupled transporter that transports a wide spectrum of oxo derivatives of heterocyclic nitrogen compounds, including allantoin, uric acid and xanthine, but not adenine. Mediates high affinity transport of uracil and 5-fluorouracil (a toxic uracil analog). Mediates transport of free pyrimidines and may function during early seedling development in salvage pathways, by the utilization of pyrimidines from seed storage tissue. In Arabidopsis thaliana (Mouse-ear cress), this protein is Ureide permease 2.